The following is a 353-amino-acid chain: Guanine nucleotide-binding protein subunit alpha (353 aa).

The interval 1-25 is disordered; sequence MGCGMSTEDKEGKARNEEIENQLKR. Residue G2 is the site of N-myristoyl glycine attachment. The S-palmitoyl cysteine moiety is linked to residue C3. The span at 7 to 25 shows a compositional bias: basic and acidic residues; that stretch reads TEDKEGKARNEEIENQLKR. The region spanning 32 to 353 is the G-alpha domain; the sequence is NEIKMLLLGA…QENLRLCGLI (322 aa). A G1 motif region spans residues 35–48; sequence KMLLLGAGESGKST. Positions 43, 44, 45, 46, 47, 48, 150, 175, 181, 203, 269, 270, 272, and 325 each coordinate GTP. A Mg(2+)-binding site is contributed by S47. Residues 173–181 are G2 motif; the sequence is DVLRSRVKT. T181 is a binding site for Mg(2+). The G3 motif stretch occupies residues 196–205; sequence YRMFDVGGQR. Residues 265–272 are G4 motif; sequence ILFLNKID. Positions 323-328 are G5 motif; sequence TCATDT.

This sequence belongs to the G-alpha family. G(q) subfamily. As to quaternary structure, g proteins are composed of 3 units; alpha, beta and gamma. The alpha chain contains the guanine nucleotide binding site. Mg(2+) serves as cofactor.

Guanine nucleotide-binding proteins (G proteins) are involved as modulators or transducers in various transmembrane signaling systems. The chain is Guanine nucleotide-binding protein subunit alpha (fadA) from Emericella nidulans (strain FGSC A4 / ATCC 38163 / CBS 112.46 / NRRL 194 / M139) (Aspergillus nidulans).